A 520-amino-acid chain; its full sequence is Maturase K (520 aa).

Belongs to the intron maturase 2 family. MatK subfamily.

It localises to the plastid. It is found in the chloroplast. Functionally, usually encoded in the trnK tRNA gene intron. Probably assists in splicing its own and other chloroplast group II introns. The polypeptide is Maturase K (Liriope muscari (Big blue lilyturf)).